The chain runs to 93 residues: Protein F-93 (93 aa).

In terms of assembly, homodimer.

Probable transcription factor that recognizes a (pseudo-)palindromic DNA target sequence. The protein is Protein F-93 of Saccharolobus solfataricus (Sulfolobus solfataricus).